Here is a 78-residue protein sequence, read N- to C-terminus: Translational regulator CsrA (78 aa).

It belongs to the CsrA/RsmA family. Homodimer; the beta-strands of each monomer intercalate to form a hydrophobic core, while the alpha-helices form wings that extend away from the core.

It localises to the cytoplasm. A translational regulator that binds mRNA to regulate translation initiation and/or mRNA stability. Usually binds in the 5'-UTR at or near the Shine-Dalgarno sequence preventing ribosome-binding, thus repressing translation. Its main target seems to be the major flagellin gene, while its function is anatagonized by FliW. This Oleidesulfovibrio alaskensis (strain ATCC BAA-1058 / DSM 17464 / G20) (Desulfovibrio alaskensis) protein is Translational regulator CsrA.